The sequence spans 389 residues: GDP-fucose protein O-fucosyltransferase 1 (389 aa).

An N-terminal signal peptide occupies residues 1 to 21; sequence MRVSKVLTLASFISVCSYSEA. N-linked (GlcNAc...) asparagine glycosylation is present at Asn-24. Cys-35 and Cys-37 are joined by a disulfide. Residue 40–43 coordinates substrate; the sequence is RFGN. A disulfide bridge links Cys-119 with Cys-135. Residue 238-240 coordinates substrate; it reads HLR. Cystine bridges form between Cys-249–Cys-281 and Cys-266–Cys-353. A substrate-binding site is contributed by 356–357; the sequence is TF.

It belongs to the glycosyltransferase 65 family. Monomer.

It localises to the endoplasmic reticulum. It catalyses the reaction L-seryl-[protein] + GDP-beta-L-fucose = 3-O-(alpha-L-fucosyl)-L-seryl-[protein] + GDP + H(+). The catalysed reaction is L-threonyl-[protein] + GDP-beta-L-fucose = 3-O-(alpha-L-fucosyl)-L-threonyl-[protein] + GDP + H(+). The protein operates within protein modification; protein glycosylation. Its function is as follows. Catalyzes the reaction that attaches fucose through an O-glycosidic linkage to a conserved serine or threonine residue found in the consensus sequence C2-X(4,5)-[S/T]-C3 of EGF domains, where C2 and C3 are the second and third conserved cysteines. Specifically uses GDP-fucose as donor substrate and proper disulfide pairing of the substrate EGF domains is required for fucose transfer. The polypeptide is GDP-fucose protein O-fucosyltransferase 1 (Caenorhabditis elegans).